Here is a 494-residue protein sequence, read N- to C-terminus: Guanosine-5'-triphosphate,3'-diphosphate pyrophosphatase (494 aa).

The protein belongs to the GppA/Ppx family. GppA subfamily.

It catalyses the reaction guanosine 3'-diphosphate 5'-triphosphate + H2O = guanosine 3',5'-bis(diphosphate) + phosphate + H(+). Its pathway is purine metabolism; ppGpp biosynthesis; ppGpp from GTP: step 2/2. In terms of biological role, catalyzes the conversion of pppGpp to ppGpp. Guanosine pentaphosphate (pppGpp) is a cytoplasmic signaling molecule which together with ppGpp controls the 'stringent response', an adaptive process that allows bacteria to respond to amino acid starvation, resulting in the coordinated regulation of numerous cellular activities. This chain is Guanosine-5'-triphosphate,3'-diphosphate pyrophosphatase, found in Shigella dysenteriae serotype 1 (strain Sd197).